Reading from the N-terminus, the 424-residue chain is ATP-sensitive inward rectifier potassium channel 8 (424 aa).

Topologically, residues 1–69 are cytoplasmic; that stretch reads MLARKSIIPE…IFTTLVDLKW (69 aa). S6 carries the post-translational modification Phosphoserine. A helical transmembrane segment spans residues 70–94; the sequence is RHTLVIFTMSFLCSWLLFAIMWWLV. At 95-126 the chain is on the extracellular side; sequence AFAHGDIYAYMEKSGMEKSGLESTVCVTNVRS. An intramembrane region (helical; Pore-forming) is located at residues 127–138; sequence FTSAFLFSIEVQ. An intramembrane region (pore-forming) is located at residues 139-145; that stretch reads VTIGFGG. A Selectivity filter motif is present at residues 140 to 145; the sequence is TIGFGG. At 146–154 the chain is on the extracellular side; sequence RMMTEECPL. Residues 155–176 traverse the membrane as a helical segment; sequence AITVLILQNIVGLIINAVMLGC. At 177-424 the chain is on the cytoplasmic side; that stretch reads IFMKTAQAHR…PEGNQNTSES (248 aa). The interval 375–424 is disordered; the sequence is SHQNSLRKRNSMRRNNSMRRNNSIRRNNSSLMVPKVQFMTPEGNQNTSES. The span at 387–404 shows a compositional bias: low complexity; that stretch reads RRNNSMRRNNSIRRNNSS.

Belongs to the inward rectifier-type potassium channel (TC 1.A.2.1) family. KCNJ8 subfamily. In terms of assembly, interacts with ABCC9. Predominantly detected in fetal and adult heart.

The protein resides in the membrane. The enzyme catalyses K(+)(in) = K(+)(out). Inward rectifier potassium channels are characterized by a greater tendency to allow potassium to flow into the cell rather than out of it. Their voltage dependence is regulated by the concentration of extracellular potassium; as external potassium is raised, the voltage range of the channel opening shifts to more positive voltages. The inward rectification is mainly due to the blockage of outward current by internal magnesium. This channel is activated by internal ATP and can be blocked by external barium. Can form a sulfonylurea-sensitive but ATP-insensitive potassium channel with ABCC9. The chain is ATP-sensitive inward rectifier potassium channel 8 (KCNJ8) from Homo sapiens (Human).